The chain runs to 231 residues: Flagellar L-ring protein (231 aa).

The first 18 residues, 1–18 (MNRLLSVFALGGAVLLAG), serve as a signal peptide directing secretion. A lipid anchor (N-palmitoyl cysteine) is attached at cysteine 19. A lipid anchor (S-diacylglycerol cysteine) is attached at cysteine 19.

This sequence belongs to the FlgH family. As to quaternary structure, the basal body constitutes a major portion of the flagellar organelle and consists of four rings (L,P,S, and M) mounted on a central rod.

It localises to the cell outer membrane. The protein resides in the bacterial flagellum basal body. Assembles around the rod to form the L-ring and probably protects the motor/basal body from shearing forces during rotation. This is Flagellar L-ring protein from Pseudomonas putida (strain GB-1).